Here is a 150-residue protein sequence, read N- to C-terminus: uncharacterized protein (150 aa).

Residues 49–88 (KEWAENASTDEIDDFLTHDDETERDADPSSGSGPELMNKA) form a disordered region. The segment covering 63-75 (FLTHDDETERDAD) has biased composition (basic and acidic residues).

This is an uncharacterized protein from Bacillus subtilis (strain 168).